Here is a 522-residue protein sequence, read N- to C-terminus: O-fucosyltransferase 38 (522 aa).

A helical; Signal-anchor for type II membrane protein membrane pass occupies residues 26–46 (AISLYLIFVFAFTIWVLVFSS). A compositionally biased stretch (basic and acidic residues) spans 54–67 (DHTKHQQQHHRDLI). A disordered region spans residues 54–73 (DHTKHQQQHHRDLIDSESFP). An N-linked (GlcNAc...) asparagine glycan is attached at N147. 284-286 (HLR) serves as a coordination point for substrate. N-linked (GlcNAc...) asparagine glycosylation occurs at N325. The interval 475-496 (HKDRQGAPRRRKGPTQGIKGRA) is disordered.

This sequence belongs to the glycosyltransferase GT106 family.

Its subcellular location is the membrane. The protein operates within glycan metabolism. The polypeptide is O-fucosyltransferase 38 (Arabidopsis thaliana (Mouse-ear cress)).